A 1023-amino-acid polypeptide reads, in one-letter code: NRPS-like oxidoreductase fscA (1023 aa).

Positions 54-454 (TYGDLNGMAT…NHPFVRQCMV (401 aa)) are adenylation. The region spanning 554–637 (PEDDVIGRQI…SIANHVRSAQ (84 aa)) is the Carrier domain. S596 carries the post-translational modification O-(pantetheine 4'-phosphoryl)serine. Positions 685–901 (LTGGAGYLGQ…VYDESTTRAR (217 aa)) constitute a Thioester reductase (TE) domain.

It belongs to the NRP synthetase family. Requires pantetheine 4'-phosphate as cofactor.

The protein operates within secondary metabolite biosynthesis. Its function is as follows. NRPS-like oxidoreductasee; part of the fragmented gene cluster that mediates the biosynthesis of fusarochromene, a tryptophan-derived metabolite closely related to a group of mycotoxins including fusarochromanone. Within the pathway, fscA acts as an oxidoreductase that reduces the carboxyl group of 4-hydroxykyrunenine to primary alcohol. The first step of the pathway is the epimerization of L-tryptophan to D-tryptophan in the presence of the NRPS-like tryptophan epimerase fscC. D-tryptophan is subsequently hydroxylated by the tryptophan 6-hydroxylase fscE to yield 6-hydroxytryptophan. The pyrrole ring undergoes cleavaged by the tryptophan 2,3-dioxygenase fscD and is finally converted to 4-hydroxykyrunenine by the hydrolase fscH. The NRPS-like oxidoreductase fscA reduces the carboxyl group to primary alcohol and the DMATS-type prenyltransferase fscG performs prenylation, followed by the formation of a chromene ring catalyzed by the oxidoreductase fscI, which leads to desacetylfusarochromene. Epoxidation by fscF and rearrangement reactions of chromene double bonds convert compound desacetylfusarochromene to fusarochromanones. Although specific acetyltransferases were not found near the fsc gene cluster, several predicted enzymes containing the N-acetyltransferase superfamily domain are present in the genome of F.equiseti. These predicted enzymes may have the potential to convert desacetylfusarochromene to fusarochromene. The protein is NRPS-like oxidoreductase fscA of Fusarium equiseti (Fusarium scirpi).